We begin with the raw amino-acid sequence, 309 residues long: HPr kinase/phosphorylase (309 aa).

Active-site residues include His138 and Lys159. Gly153–Ser160 contributes to the ATP binding site. Ser160 is a Mg(2+) binding site. The Proton acceptor; for phosphorylation activity. Proton donor; for dephosphorylation activity role is filled by Asp177. The tract at residues Leu201–Asn210 is important for the catalytic mechanism of both phosphorylation and dephosphorylation. Position 202 (Glu202) interacts with Mg(2+). Residue Arg243 is part of the active site. The interval Pro264–Arg269 is important for the catalytic mechanism of dephosphorylation.

Belongs to the HPrK/P family. Homohexamer. The cofactor is Mg(2+).

The catalysed reaction is [HPr protein]-L-serine + ATP = [HPr protein]-O-phospho-L-serine + ADP + H(+). It carries out the reaction [HPr protein]-O-phospho-L-serine + phosphate + H(+) = [HPr protein]-L-serine + diphosphate. Its function is as follows. Catalyzes the ATP- as well as the pyrophosphate-dependent phosphorylation of a specific serine residue in HPr, a phosphocarrier protein of the phosphoenolpyruvate-dependent sugar phosphotransferase system (PTS). HprK/P also catalyzes the pyrophosphate-producing, inorganic phosphate-dependent dephosphorylation (phosphorolysis) of seryl-phosphorylated HPr (P-Ser-HPr). The two antagonistic activities of HprK/P are regulated by several intracellular metabolites, which change their concentration in response to the absence or presence of rapidly metabolisable carbon sources (glucose, fructose, etc.) in the growth medium. Also phosphorylates/dephosphorylates the HPr-like catabolite repression protein crh on a specific serine residue. Therefore, by controlling the phosphorylation state of HPr and crh, HPrK/P is a sensor enzyme that plays a major role in the regulation of carbon metabolism and sugar transport: it mediates carbon catabolite repression (CCR), and regulates PTS-catalyzed carbohydrate uptake and inducer exclusion. The polypeptide is HPr kinase/phosphorylase (Bacillus cereus (strain B4264)).